Reading from the N-terminus, the 463-residue chain is Glutamate--tRNA ligase (463 aa).

Residues 10–20 (PSPTGHLHIGG) carry the 'HIGH' region motif. The 'KMSKS' region signature appears at 236 to 240 (KLSKR). Lys-239 is an ATP binding site.

Belongs to the class-I aminoacyl-tRNA synthetase family. Glutamate--tRNA ligase type 1 subfamily. Monomer.

The protein resides in the cytoplasm. The catalysed reaction is tRNA(Glu) + L-glutamate + ATP = L-glutamyl-tRNA(Glu) + AMP + diphosphate. Functionally, catalyzes the attachment of glutamate to tRNA(Glu) in a two-step reaction: glutamate is first activated by ATP to form Glu-AMP and then transferred to the acceptor end of tRNA(Glu). The protein is Glutamate--tRNA ligase of Nitratidesulfovibrio vulgaris (strain ATCC 29579 / DSM 644 / CCUG 34227 / NCIMB 8303 / VKM B-1760 / Hildenborough) (Desulfovibrio vulgaris).